We begin with the raw amino-acid sequence, 228 residues long: MITQKEKEHLAKDKQNIYLRIISGIALVSLFVIAILCLKTLFYILMILVGLGMLSEWYNMTYPSINYLLIGLIIIPIPISLLIFLSMEESNRLVIMLYFCILWSVDTFAMIGGKTFKGIKLAPKISPKKTWTGLITGTVSAGLVSVLVSLIPNYHIEHYYFSNKIYLFIISCILALIAQSSDLFISYFKRKFNIKDSGHIIPGHGGVLDRFDSIILTAPVFFCINIYL.

The next 6 membrane-spanning stretches (helical) occupy residues 31-51, 65-85, 93-113, 131-151, 165-185, and 206-226; these read FVIA…LVGL, INYL…LIFL, LVIM…MIGG, WTGL…VSLI, IYLF…DLFI, and GVLD…CINI.

This sequence belongs to the CDS family.

It localises to the cell membrane. It carries out the reaction a 1,2-diacyl-sn-glycero-3-phosphate + CTP + H(+) = a CDP-1,2-diacyl-sn-glycerol + diphosphate. It functions in the pathway phospholipid metabolism; CDP-diacylglycerol biosynthesis; CDP-diacylglycerol from sn-glycerol 3-phosphate: step 3/3. The chain is Phosphatidate cytidylyltransferase (cdsA) from Rickettsia prowazekii (strain Madrid E).